Reading from the N-terminus, the 221-residue chain is Deoxyribose-phosphate aldolase 1 (221 aa).

The Proton donor/acceptor role is filled by Asp-89. Catalysis depends on Lys-152, which acts as the Schiff-base intermediate with acetaldehyde. The active-site Proton donor/acceptor is Lys-181.

Belongs to the DeoC/FbaB aldolase family. DeoC type 1 subfamily.

It is found in the cytoplasm. It carries out the reaction 2-deoxy-D-ribose 5-phosphate = D-glyceraldehyde 3-phosphate + acetaldehyde. Its pathway is carbohydrate degradation; 2-deoxy-D-ribose 1-phosphate degradation; D-glyceraldehyde 3-phosphate and acetaldehyde from 2-deoxy-alpha-D-ribose 1-phosphate: step 2/2. Catalyzes a reversible aldol reaction between acetaldehyde and D-glyceraldehyde 3-phosphate to generate 2-deoxy-D-ribose 5-phosphate. This Oceanobacillus iheyensis (strain DSM 14371 / CIP 107618 / JCM 11309 / KCTC 3954 / HTE831) protein is Deoxyribose-phosphate aldolase 1.